Consider the following 577-residue polypeptide: E3 ubiquitin-protein ligase MSL2 (577 aa).

The segment at 1–116 is sufficient for interaction with MSL1; sequence MNPVNATALY…CEYITQTTLA (116 aa). Residues cysteine 44, cysteine 47, cysteine 62, histidine 64, cysteine 67, cysteine 70, cysteine 81, and cysteine 84 each contribute to the Zn(2+) site. Residues 44-85 form an RING-type zinc finger; sequence CCVCGHLLQDPIAPTNSTCQHYVCKTCKGKKMMMKPSCSWCK. Lysine 375 is covalently cross-linked (Glycyl lysine isopeptide (Lys-Gly) (interchain with G-Cter in SUMO2)). The interval 405-427 is disordered; that stretch reads TKSMKKSHEHGSKKSHSKTKPGI. Basic residues predominate over residues 407–423; the sequence is SMKKSHEHGSKKSHSKT. At serine 447 the chain carries Phosphoserine. A CXC MSL2-type domain is found at 457–508; sequence QEKKGCKCGRATQNPSVLTCRGQRCPCYSNRKACLDCICRGCQNSYMANGEK. 9 residues coordinate Zn(2+): cysteine 462, cysteine 464, cysteine 476, cysteine 481, cysteine 483, cysteine 490, cysteine 493, cysteine 495, and cysteine 498.

Belongs to the MSL2 family. As to quaternary structure, component of a multisubunit histone acetyltransferase complex (MSL) at least composed of the KAT8/MOF/MYST1, MSL1/hampin, MSL2 and MSL3. Forms a MSL heterotetrameric core with MSL1.

Its subcellular location is the nucleus. It is found in the chromosome. It carries out the reaction S-ubiquitinyl-[E2 ubiquitin-conjugating enzyme]-L-cysteine + [acceptor protein]-L-lysine = [E2 ubiquitin-conjugating enzyme]-L-cysteine + N(6)-ubiquitinyl-[acceptor protein]-L-lysine.. It functions in the pathway protein modification; protein ubiquitination. Its function is as follows. Non-catalytic component of the MSL histone acetyltransferase complex, a multiprotein complex that mediates the majority of histone H4 acetylation at 'Lys-16' (H4K16ac), an epigenetic mark that prevents chromatin compaction. The MSL complex is required for chromosome stability and genome integrity by maintaining homeostatic levels of H4K16ac. The MSL complex is also involved in gene dosage by promoting up-regulation of genes expressed by the X chromosome. X up-regulation is required to compensate for autosomal biallelic expression. The MSL complex also participates in gene dosage compensation by promoting expression of Tsix non-coding RNA. MSL2 plays a key role in gene dosage by ensuring biallelic expression of a subset of dosage-sensitive genes, including many haploinsufficient genes. Acts by promoting promoter-enhancer contacts, thereby preventing DNA methylation of one allele and creating a methylation-free environment for methylation-sensitive transcription factors such as SP1, KANSL1 and KANSL3. Also acts as an E3 ubiquitin ligase that promotes monoubiquitination of histone H2B at 'Lys-35' (H2BK34Ub), but not that of H2A. This activity is greatly enhanced by heterodimerization with MSL1. H2B ubiquitination in turn stimulates histone H3 methylation at 'Lys-4' (H3K4me) and 'Lys-79' (H3K79me) and leads to gene activation, including that of HOXA9 and MEIS1. Also involved in the DNA damage response by mediating ubiquitination of TP53/p53 and TP53BP1. The protein is E3 ubiquitin-protein ligase MSL2 of Homo sapiens (Human).